Here is a 1217-residue protein sequence, read N- to C-terminus: CST complex subunit CTC1 (1217 aa).

Residues 328–347 form a disordered region; that stretch reads EADPKPLPMPSNSEDKKDPE.

Belongs to the CTC1 family. Component of the CST complex, composed of TEN1/C17orf106, CTC1/C17orf68 and STN1; in the complex interacts directly with STN1. Interacts with ACD and POT1.

The protein resides in the nucleus. It localises to the chromosome. It is found in the telomere. Its function is as follows. Component of the CST complex proposed to act as a specialized replication factor promoting DNA replication under conditions of replication stress or natural replication barriers such as the telomere duplex. The CST complex binds single-stranded DNA with high affinity in a sequence-independent manner, while isolated subunits bind DNA with low affinity by themselves. Initially the CST complex has been proposed to protect telomeres from DNA degradation. However, the CST complex has been shown to be involved in several aspects of telomere replication. The CST complex inhibits telomerase and is involved in telomere length homeostasis; it is proposed to bind to newly telomerase-synthesized 3' overhangs and to terminate telomerase action implicating the association with the ACD:POT1 complex thus interfering with its telomerase stimulation activity. The CST complex is also proposed to be involved in fill-in synthesis of the telomeric C-strand probably implicating recruitment and activation of DNA polymerase alpha. The CST complex facilitates recovery from many forms of exogenous DNA damage; seems to be involved in the re-initiation of DNA replication at repaired forks and/or dormant origins. Involved in telomere maintenance. Involved in genome stability. May be in involved in telomeric C-strand fill-in during late S/G2 phase. The polypeptide is CST complex subunit CTC1 (CTC1) (Homo sapiens (Human)).